Consider the following 693-residue polypeptide: Polyribonucleotide nucleotidyltransferase (693 aa).

Mg(2+) is bound by residues Asp-486 and Asp-492. One can recognise a KH domain in the interval 553–612; that stretch reads PRFSSMRIDTEKIKDVIGKGGATIRSITEQTGTTIEIEDDGSVKIAATDKAAAANARRLI. Residues 622–690 enclose the S1 motif domain; that stretch reads GRIYDAKVTK…RQGRVRLSIK (69 aa).

The protein belongs to the polyribonucleotide nucleotidyltransferase family. In terms of assembly, component of the RNA degradosome, which is a multiprotein complex involved in RNA processing and mRNA degradation. It depends on Mg(2+) as a cofactor.

It localises to the cytoplasm. The catalysed reaction is RNA(n+1) + phosphate = RNA(n) + a ribonucleoside 5'-diphosphate. Functionally, involved in mRNA degradation. Catalyzes the phosphorolysis of single-stranded polyribonucleotides processively in the 3'- to 5'-direction. This chain is Polyribonucleotide nucleotidyltransferase, found in Dichelobacter nodosus (strain VCS1703A).